The following is a 639-amino-acid chain: UvrABC system protein C (639 aa).

Residues 1-16 (MTDLPVDEPDRDDGAD) are compositionally biased toward acidic residues. The interval 1–28 (MTDLPVDEPDRDDGADQPDAGADPATPR) is disordered. A compositionally biased stretch (low complexity) spans 17–27 (QPDAGADPATP). Residues 42 to 120 (SSPGVYRMID…IKKLKPRYNI (79 aa)) enclose the GIY-YIG domain. Residues 230–265 (KALQHDLAKRMDEAAQALDYEQAAIFRDRIKALTNV) enclose the UVR domain.

This sequence belongs to the UvrC family. In terms of assembly, interacts with UvrB in an incision complex.

Its subcellular location is the cytoplasm. Functionally, the UvrABC repair system catalyzes the recognition and processing of DNA lesions. UvrC both incises the 5' and 3' sides of the lesion. The N-terminal half is responsible for the 3' incision and the C-terminal half is responsible for the 5' incision. This is UvrABC system protein C from Rhodospirillum rubrum (strain ATCC 11170 / ATH 1.1.1 / DSM 467 / LMG 4362 / NCIMB 8255 / S1).